A 471-amino-acid polypeptide reads, in one-letter code: Tetratricopeptide repeat protein 29 (471 aa).

7 TPR repeats span residues 92–131, 136–173, 182–215, 234–267, 274–307, 314–347, and 354–387; these read DKLREAAQARSLFWLQRPLEDQPDKLDNFYHYLTKAEAAE, YEEVYNNLYALACYFDNSEDKWVRNHFYERCFKIAQLI, AEAEAHMGLLYEEEGELLKAAEHYEAFHELTQGR, VRTYRLLSDRMLQNRDYKQAIKILIKASEIAREG, GEASYYLGLAHLASGEYETALSVLDRYSEISTSL, GRAYEAMAKVLQSQGEMTEAIKYLEKFVVIARNN, and IQACTMLGDIYNEKGQYNKASDYFQQAFSTAMEV.

The protein localises to the cytoplasm. It localises to the cytoskeleton. Its subcellular location is the flagellum axoneme. Its function is as follows. Axonemal protein which is implicated in axonemal and/or peri-axonemal structure assembly and regulates flagellum assembly and beating and therefore sperm motility. This is Tetratricopeptide repeat protein 29 (Ttc29) from Rattus norvegicus (Rat).